The primary structure comprises 288 residues: ATP synthase subunit a (288 aa).

A run of 6 helical transmembrane segments spans residues 47–67 (LDSM…FWMV), 104–124 (LIAP…LMDL), 157–177 (DPNI…FYSI), 199–219 (PIVQ…TLIA), 237–257 (LIFI…SVPW), and 258–278 (AIFH…LTIV).

Belongs to the ATPase A chain family. As to quaternary structure, F-type ATPases have 2 components, CF(1) - the catalytic core - and CF(0) - the membrane proton channel. CF(1) has five subunits: alpha(3), beta(3), gamma(1), delta(1), epsilon(1). CF(0) has three main subunits: a(1), b(2) and c(9-12). The alpha and beta chains form an alternating ring which encloses part of the gamma chain. CF(1) is attached to CF(0) by a central stalk formed by the gamma and epsilon chains, while a peripheral stalk is formed by the delta and b chains.

The protein resides in the cell inner membrane. Key component of the proton channel; it plays a direct role in the translocation of protons across the membrane. This is ATP synthase subunit a from Psychrobacter cryohalolentis (strain ATCC BAA-1226 / DSM 17306 / VKM B-2378 / K5).